The following is an 818-amino-acid chain: Protocadherin beta-1 (818 aa).

The N-terminal stretch at Met1–Ala28 is a signal peptide. Over Thr29 to Leu691 the chain is Extracellular. Cadherin domains lie at Val35–Phe133, Pro138–Phe242, Ser243–Val347, Met348–Phe452, and Tyr457–Ile562. 4 N-linked (GlcNAc...) asparagine glycosylation sites follow: Asn169, Asn209, Asn257, and Asn419. The N-linked (GlcNAc...) asparagine glycan is linked to Asn568. A Cadherin 6 domain is found at Val577–Leu672. A helical transmembrane segment spans residues Val692–Ile712. The Cytoplasmic portion of the chain corresponds to His713 to Met818. The tract at residues Met789 to Met818 is disordered. Residues Asp800 to Met818 show a composition bias toward basic and acidic residues.

The protein resides in the cell membrane. Functionally, potential calcium-dependent cell-adhesion protein. May be involved in the establishment and maintenance of specific neuronal connections in the brain. This is Protocadherin beta-1 (PCDHB1) from Homo sapiens (Human).